The following is a 189-amino-acid chain: Selenoprotein S (189 aa).

A helical membrane pass occupies residues 28-48 (SLLATYGWYIVFSCILLYVVF). Residues 78-90 (RQEALAAARLKMQ) form a VCP/p97-interacting motif (VIM) region. The tract at residues 115-189 (KIEMWDSMQE…RRGPSSGGUG (75 aa)) is disordered. Residue S140 is modified to Phosphoserine. The span at 159 to 173 (RGGGYNPLSGEGGGA) shows a compositional bias: gly residues. A non-standard amino acid (selenocysteine) is located at residue U188.

It belongs to the selenoprotein S family. In terms of assembly, interacts with DERL1 and (via VIM motif) with VCP, suggesting that it forms a membrane complex with DERL1 that serves as a receptor for VCP. Also interacts with DERL2, DERL3 and SELENOK. The SELENOK-SELENOS complex interacts with VCP. Interacts with CCDC47. In terms of processing, truncated SELENOS proteins produced by failed UGA/Sec decoding are ubiquitinated by the CRL2(KLHDC2) and CRL2(KLHDC3) complexes, which recognizes the glycine (Gly) at the C-terminus of truncated SELENOS proteins. Truncated SELENOS proteins produced by failed UGA/Sec decoding are also ubiquitinated by the CRL5(KLHDC1) complex.

It localises to the endoplasmic reticulum membrane. The protein localises to the cytoplasm. Involved in the degradation process of misfolded endoplasmic reticulum (ER) luminal proteins. Participates in the transfer of misfolded proteins from the ER to the cytosol, where they are destroyed by the proteasome in a ubiquitin-dependent manner. Probably acts by serving as a linker between DERL1, which mediates the retrotranslocation of misfolded proteins into the cytosol, and the ATPase complex VCP, which mediates the translocation and ubiquitination. The protein is Selenoprotein S of Homo sapiens (Human).